The sequence spans 100 residues: NADH-quinone oxidoreductase subunit K (100 aa).

A run of 3 helical transmembrane segments spans residues 4–24, 28–48, and 61–81; these read FEYY…GVII, IIAM…AFVA, and FVFF…GLII.

It belongs to the complex I subunit 4L family. NDH-1 is composed of 14 different subunits. Subunits NuoA, H, J, K, L, M, N constitute the membrane sector of the complex.

The protein localises to the cell inner membrane. It catalyses the reaction a quinone + NADH + 5 H(+)(in) = a quinol + NAD(+) + 4 H(+)(out). Its function is as follows. NDH-1 shuttles electrons from NADH, via FMN and iron-sulfur (Fe-S) centers, to quinones in the respiratory chain. The immediate electron acceptor for the enzyme in this species is believed to be ubiquinone. Couples the redox reaction to proton translocation (for every two electrons transferred, four hydrogen ions are translocated across the cytoplasmic membrane), and thus conserves the redox energy in a proton gradient. The chain is NADH-quinone oxidoreductase subunit K from Sulfurihydrogenibium sp. (strain YO3AOP1).